The primary structure comprises 44 residues: Unknown protein 9 (44 aa).

The polypeptide is Unknown protein 9 (Pseudotsuga menziesii (Douglas-fir)).